The primary structure comprises 164 residues: Phosphopantetheine adenylyltransferase (164 aa).

Serine 9 is a binding site for substrate. Residues 9–10 (SF) and histidine 17 contribute to the ATP site. Residues lysine 41, leucine 73, and lysine 87 each coordinate substrate. Residues 88–90 (GLR), glutamate 98, and 123–129 (YSYISSS) contribute to the ATP site.

The protein belongs to the bacterial CoaD family. Homohexamer. Mg(2+) serves as cofactor.

Its subcellular location is the cytoplasm. The catalysed reaction is (R)-4'-phosphopantetheine + ATP + H(+) = 3'-dephospho-CoA + diphosphate. It participates in cofactor biosynthesis; coenzyme A biosynthesis; CoA from (R)-pantothenate: step 4/5. Functionally, reversibly transfers an adenylyl group from ATP to 4'-phosphopantetheine, yielding dephospho-CoA (dPCoA) and pyrophosphate. The chain is Phosphopantetheine adenylyltransferase from Clostridium perfringens (strain SM101 / Type A).